A 31-amino-acid polypeptide reads, in one-letter code: MSLIIGYIILLACAFGLAAGLYFGLSAIKLI.

Residues 3 to 23 traverse the membrane as a helical segment; sequence LIIGYIILLACAFGLAAGLYF.

The protein belongs to the PetL family. The 4 large subunits of the cytochrome b6-f complex are cytochrome b6, subunit IV (17 kDa polypeptide, PetD), cytochrome f and the Rieske protein, while the 4 small subunits are PetG, PetL, PetM and PetN. The complex functions as a dimer.

It is found in the plastid. The protein resides in the chloroplast thylakoid membrane. Functionally, component of the cytochrome b6-f complex, which mediates electron transfer between photosystem II (PSII) and photosystem I (PSI), cyclic electron flow around PSI, and state transitions. PetL is important for photoautotrophic growth as well as for electron transfer efficiency and stability of the cytochrome b6-f complex. In Guillardia theta (Cryptophyte), this protein is Cytochrome b6-f complex subunit 6.